The sequence spans 800 residues: Protein MICRORCHIDIA 4 (800 aa).

2 disordered regions span residues 1-76 and 552-702; these read MEPI…ARSD and AKRQ…RTLS. Residues 9–18 show a composition bias toward polar residues; that stretch reads NPVTTSTLST. Residues 36–47 are compositionally biased toward low complexity; it reads ELSSSNEGSELG. 2 stretches are compositionally biased toward basic and acidic residues: residues 559 to 578 and 628 to 641; these read SAKD…EFDP and VSKD…EKGG. The span at 666–675 shows a compositional bias: acidic residues; the sequence is NSDDDYDCDS. Residues 699–766 are a coiled coil; sequence RTLSQLEQEN…QASLIDVFAE (68 aa). Short sequence motifs (nuclear localization signal) lie at residues 716–723 and 735–742; these read DKKEEVFL and LRKTLEAE.

The protein belongs to the MORC ATPase protein family. In terms of assembly, homodimer and heterodimer. Component of an RNA-directed DNA methylation (RdDM) complex. Forms homomeric complexes. The cofactor is Mg(2+). Mn(2+) is required as a cofactor.

Its subcellular location is the nucleus. Functionally, exhibits ATPase activity. Binds DNA/RNA in a non-specific manner and exhibits endonuclease activity. Probably involved in DNA repair. Involved in RNA-directed DNA methylation (RdDM) as a component of the RdDM machinery and required for gene silencing. May also be involved in the regulation of chromatin architecture to maintain gene silencing. Together with MORC7, acts to suppress a wide set of non-methylated protein-coding genes, especially involved in pathogen response. Positive regulator of defense against the oomycete Hyaloperonospora arabidopsidis (Hpa). This is Protein MICRORCHIDIA 4 from Arabidopsis thaliana (Mouse-ear cress).